The sequence spans 454 residues: Exopolyphosphatase PRUNE1 (454 aa).

N-acetylmethionine is present on methionine 1. Residues aspartate 28, aspartate 30, aspartate 106, and aspartate 179 each coordinate Mn(2+). The DHH motif motif lies at 106 to 108 (DHH). The essential for homodimerization stretch occupies residues 394–421 (SLISGLSQDEEDPPLPPTPMNSLVDECP). The segment at 397–420 (SGLSQDEEDPPLPPTPMNSLVDEC) is disordered. Serine 400 is modified (phosphoserine). Threonine 411 bears the Phosphothreonine mark. Position 415 is a phosphoserine (serine 415).

This sequence belongs to the PPase class C family. Prune subfamily. Homooligomer. Able to homodimerize via its C-terminal domain. Interacts with NME1. Interacts with GSK3; at focal adhesion complexes where paxillin and vinculin are colocalized. Interacts with alpha and beta tubulin. Mn(2+) is required as a cofactor.

It localises to the cytoplasm. The protein resides in the nucleus. Its subcellular location is the cell junction. It is found in the focal adhesion. It catalyses the reaction diphosphate + H2O = 2 phosphate + H(+). Activated by magnesium ions and inhibited by manganese ions. Inhibited by dipyridamole, moderately sensitive to IBMX and inhibited by vinpocetine. Its function is as follows. Phosphodiesterase (PDE) that has higher activity toward cAMP than cGMP, as substrate. Plays a role in cell proliferation, migration and differentiation, and acts as a negative regulator of NME1. Plays a role in the regulation of neurogenesis. Involved in the regulation of microtubule polymerization. The polypeptide is Exopolyphosphatase PRUNE1 (Prune1) (Mus musculus (Mouse)).